A 250-amino-acid polypeptide reads, in one-letter code: Aliphatic sulfonates import ATP-binding protein SsuB 2 (250 aa).

Residues 13–229 form the ABC transporter domain; that stretch reads VRLQGLTRSF…SYRDPLLGEY (217 aa). 45–52 serves as a coordination point for ATP; that stretch reads GHSGSGKS.

This sequence belongs to the ABC transporter superfamily. Aliphatic sulfonates importer (TC 3.A.1.17.2) family. The complex is composed of two ATP-binding proteins (SsuB), two transmembrane proteins (SsuC) and a solute-binding protein (SsuA).

Its subcellular location is the cell membrane. It carries out the reaction ATP + H2O + aliphatic sulfonate-[sulfonate-binding protein]Side 1 = ADP + phosphate + aliphatic sulfonateSide 2 + [sulfonate-binding protein]Side 1.. In terms of biological role, part of the ABC transporter complex SsuABC involved in aliphatic sulfonates import. Responsible for energy coupling to the transport system. The polypeptide is Aliphatic sulfonates import ATP-binding protein SsuB 2 (Streptomyces avermitilis (strain ATCC 31267 / DSM 46492 / JCM 5070 / NBRC 14893 / NCIMB 12804 / NRRL 8165 / MA-4680)).